A 145-amino-acid polypeptide reads, in one-letter code: Hemoglobin subunit beta (145 aa).

Positions 1–145 (MLTAEEKAAV…VANALAHRYH (145 aa)) constitute a Globin domain. Phosphothreonine is present on Thr11. The residue at position 58 (Lys58) is an N6-acetyllysine. A heme b-binding site is contributed by His62. Residue Lys81 is modified to N6-acetyllysine. Heme b is bound at residue His91. Cys92 carries the post-translational modification S-nitrosocysteine.

This sequence belongs to the globin family. In terms of assembly, heterotetramer of two alpha chains and two beta chains. As to expression, red blood cells.

Involved in oxygen transport from the lung to the various peripheral tissues. This Ovis aries musimon (Mouflon) protein is Hemoglobin subunit beta (HBB).